The sequence spans 664 residues: Exoribonuclease 2 (664 aa).

The RNB domain occupies 193–521; sequence RIDMTHIPFV…INHRMLKALI (329 aa). Residues 568 to 650 enclose the S1 motif domain; sequence QTLFTGEIFD…ENRSLVAKPT (83 aa).

The protein belongs to the RNR ribonuclease family. RNase II subfamily.

The protein resides in the cytoplasm. It catalyses the reaction Exonucleolytic cleavage in the 3'- to 5'-direction to yield nucleoside 5'-phosphates.. Involved in mRNA degradation. Hydrolyzes single-stranded polyribonucleotides processively in the 3' to 5' direction. This Vibrio vulnificus (strain YJ016) protein is Exoribonuclease 2.